We begin with the raw amino-acid sequence, 463 residues long: Soluble pyridine nucleotide transhydrogenase (463 aa).

An FAD-binding site is contributed by 35-44 (EDKPTVGGNC).

This sequence belongs to the class-I pyridine nucleotide-disulfide oxidoreductase family. FAD serves as cofactor.

It localises to the cytoplasm. The enzyme catalyses NAD(+) + NADPH = NADH + NADP(+). In terms of biological role, conversion of NADPH, generated by peripheral catabolic pathways, to NADH, which can enter the respiratory chain for energy generation. The protein is Soluble pyridine nucleotide transhydrogenase of Marinobacter nauticus (strain ATCC 700491 / DSM 11845 / VT8) (Marinobacter aquaeolei).